The following is a 107-amino-acid chain: Acetyl-CoA acetyltransferase (107 aa).

Cys-88 functions as the Acyl-thioester intermediate in the catalytic mechanism.

It belongs to the thiolase-like superfamily. Thiolase family. Homotetramer.

The protein localises to the cytoplasm. The enzyme catalyses 2 acetyl-CoA = acetoacetyl-CoA + CoA. Catalyzes the condensation of two molecules of acetyl-CoA to produce acetoacetyl-CoA. This is Acetyl-CoA acetyltransferase (thi) from Clostridioides difficile (Peptoclostridium difficile).